The sequence spans 204 residues: High frequency lysogenization protein HflD homolog (204 aa).

Belongs to the HflD family.

Its subcellular location is the cytoplasm. The protein resides in the cell inner membrane. This is High frequency lysogenization protein HflD homolog from Xylella fastidiosa (strain M23).